A 433-amino-acid chain; its full sequence is CinA-like protein (433 aa).

It belongs to the CinA family.

The protein is CinA-like protein of Prochlorococcus marinus subsp. pastoris (strain CCMP1986 / NIES-2087 / MED4).